Here is a 414-residue protein sequence, read N- to C-terminus: Protein PHLOEM PROTEIN 2-LIKE A10 (414 aa).

A run of 2 helical transmembrane segments spans residues 20 to 40 (WLIF…VYHL) and 379 to 399 (YVGA…LHII).

Its subcellular location is the membrane. The chain is Protein PHLOEM PROTEIN 2-LIKE A10 (PP2A10) from Arabidopsis thaliana (Mouse-ear cress).